We begin with the raw amino-acid sequence, 218 residues long: Small ribosomal subunit protein uS3c (218 aa).

Positions 47 to 118 constitute a KH type-2 domain; the sequence is VQKNMRIFSG…KLNIAITRIG (72 aa).

Belongs to the universal ribosomal protein uS3 family. Part of the 30S ribosomal subunit.

It localises to the plastid. The protein localises to the chloroplast. The sequence is that of Small ribosomal subunit protein uS3c (rps3) from Cucumis sativus (Cucumber).